Reading from the N-terminus, the 129-residue chain is Cytochrome c oxidase subunit 5B, mitochondrial (129 aa).

Residues 1 to 31 (MASRLLRGVGALAAQALRAHGPRGVAATRSM) constitute a mitochondrion transit peptide. An N6-acetyllysine mark is found at K68 and K86. C91, C93, C113, and C116 together coordinate Zn(2+). Position 121 is an N6-acetyllysine (K121).

Belongs to the cytochrome c oxidase subunit 5B family. As to quaternary structure, component of the cytochrome c oxidase (complex IV, CIV), a multisubunit enzyme composed of 14 subunits. The complex is composed of a catalytic core of 3 subunits MT-CO1, MT-CO2 and MT-CO3, encoded in the mitochondrial DNA, and 11 supernumerary subunits COX4I, COX5A, COX5B, COX6A, COX6B, COX6C, COX7A, COX7B, COX7C, COX8 and NDUFA4, which are encoded in the nuclear genome. The complex exists as a monomer or a dimer and forms supercomplexes (SCs) in the inner mitochondrial membrane with NADH-ubiquinone oxidoreductase (complex I, CI) and ubiquinol-cytochrome c oxidoreductase (cytochrome b-c1 complex, complex III, CIII), resulting in different assemblies (supercomplex SCI(1)III(2)IV(1) and megacomplex MCI(2)III(2)IV(2)).

The protein localises to the mitochondrion inner membrane. It functions in the pathway energy metabolism; oxidative phosphorylation. Component of the cytochrome c oxidase, the last enzyme in the mitochondrial electron transport chain which drives oxidative phosphorylation. The respiratory chain contains 3 multisubunit complexes succinate dehydrogenase (complex II, CII), ubiquinol-cytochrome c oxidoreductase (cytochrome b-c1 complex, complex III, CIII) and cytochrome c oxidase (complex IV, CIV), that cooperate to transfer electrons derived from NADH and succinate to molecular oxygen, creating an electrochemical gradient over the inner membrane that drives transmembrane transport and the ATP synthase. Cytochrome c oxidase is the component of the respiratory chain that catalyzes the reduction of oxygen to water. Electrons originating from reduced cytochrome c in the intermembrane space (IMS) are transferred via the dinuclear copper A center (CU(A)) of subunit 2 and heme A of subunit 1 to the active site in subunit 1, a binuclear center (BNC) formed by heme A3 and copper B (CU(B)). The BNC reduces molecular oxygen to 2 water molecules using 4 electrons from cytochrome c in the IMS and 4 protons from the mitochondrial matrix. This is Cytochrome c oxidase subunit 5B, mitochondrial (Cox5b) from Rattus norvegicus (Rat).